A 332-amino-acid chain; its full sequence is Ribose-phosphate pyrophosphokinase (332 aa).

Aspartate 55 to glutamate 57 is an ATP binding site. Mg(2+) contacts are provided by histidine 148 and aspartate 187. The active site involves lysine 211. Residues arginine 213, aspartate 237, and aspartate 241–threonine 245 each bind D-ribose 5-phosphate.

The protein belongs to the ribose-phosphate pyrophosphokinase family. Class I subfamily. As to quaternary structure, homohexamer. Mg(2+) serves as cofactor.

It localises to the cytoplasm. It carries out the reaction D-ribose 5-phosphate + ATP = 5-phospho-alpha-D-ribose 1-diphosphate + AMP + H(+). The protein operates within metabolic intermediate biosynthesis; 5-phospho-alpha-D-ribose 1-diphosphate biosynthesis; 5-phospho-alpha-D-ribose 1-diphosphate from D-ribose 5-phosphate (route I): step 1/1. Involved in the biosynthesis of the central metabolite phospho-alpha-D-ribosyl-1-pyrophosphate (PRPP) via the transfer of pyrophosphoryl group from ATP to 1-hydroxyl of ribose-5-phosphate (Rib-5-P). This chain is Ribose-phosphate pyrophosphokinase, found in Prochlorococcus marinus (strain MIT 9313).